Here is a 261-residue protein sequence, read N- to C-terminus: MRIALGIEYDGSKFYGWQRQAEVNSVQAELERALSIVANEPIEVQCAGRTDAGVHATGQVVHFDTNAVRKEGAWTLGVNVHLPDDIAVRWAMPVNDDFHARFSATARRYRYVIFNHNFRPGILRKGVSHYHGDIDVERMHDAAQALIGERDFTSFRAIGCQSNTPFRNVHKVSVSRHGMYIVVDIQANAFLHHMVRNIVGSLLEIGLGNQPLDWMATLLEAKDRSQAAATAKPHGLYLVDVTYPESFGLPKLSLGPLFMPD.

Asp51 functions as the Nucleophile in the catalytic mechanism. A substrate-binding site is contributed by Tyr109.

The protein belongs to the tRNA pseudouridine synthase TruA family. As to quaternary structure, homodimer.

The enzyme catalyses uridine(38/39/40) in tRNA = pseudouridine(38/39/40) in tRNA. Functionally, formation of pseudouridine at positions 38, 39 and 40 in the anticodon stem and loop of transfer RNAs. The protein is tRNA pseudouridine synthase A of Shewanella amazonensis (strain ATCC BAA-1098 / SB2B).